Reading from the N-terminus, the 291-residue chain is 4-diphosphocytidyl-2-C-methyl-D-erythritol kinase (291 aa).

Residue K19 is part of the active site. ATP is bound at residue P102–S112. D144 is an active-site residue.

Belongs to the GHMP kinase family. IspE subfamily.

The catalysed reaction is 4-CDP-2-C-methyl-D-erythritol + ATP = 4-CDP-2-C-methyl-D-erythritol 2-phosphate + ADP + H(+). Its pathway is isoprenoid biosynthesis; isopentenyl diphosphate biosynthesis via DXP pathway; isopentenyl diphosphate from 1-deoxy-D-xylulose 5-phosphate: step 3/6. Functionally, catalyzes the phosphorylation of the position 2 hydroxy group of 4-diphosphocytidyl-2C-methyl-D-erythritol. This Ectopseudomonas mendocina (strain ymp) (Pseudomonas mendocina) protein is 4-diphosphocytidyl-2-C-methyl-D-erythritol kinase.